Here is a 347-residue protein sequence, read N- to C-terminus: DNA damage tolerance protein RHC31 (347 aa).

At S9 the chain carries Phosphoserine. Residue K35 forms a Glycyl lysine isopeptide (Lys-Gly) (interchain with G-Cter in SUMO) linkage.

Its function is as follows. Could be involved in a ubiquitin-related process important for DNA damage tolerance. The polypeptide is DNA damage tolerance protein RHC31 (AOS1) (Saccharomyces cerevisiae (strain ATCC 204508 / S288c) (Baker's yeast)).